The chain runs to 67 residues: Large ribosomal subunit protein bL35 (67 aa).

The segment covering 1–11 (MPKLKTRKAAA) has biased composition (basic residues). Positions 1-22 (MPKLKTRKAAAKRFEATGSGKK) are disordered.

Belongs to the bacterial ribosomal protein bL35 family.

The protein is Large ribosomal subunit protein bL35 of Microcystis aeruginosa (strain NIES-843 / IAM M-2473).